Consider the following 376-residue polypeptide: MAVSKFVQIRRDLHKIPEIGFKEWKTQQYILDYIGTLSNEHVEVKVWRTGVIVKVKGKNPEKVIGYRADIDGLPITEETGYEFASVHEGMMHACGHDLHTTIGLGLLTAAVTERIDDDLVFLFQPAEEGPGGALPMLESEELKEWKPNIILGLHIAPEYPVGTIATKEGLLFANTSELYVDLKGKGGHAAYPHTANDMIVAASHLVTQLQSVISRNVNPLDSAVITIGKITGGTVQNIIAEKSRLEGTIRTLSVESMSRVKSRIEAIVAGIEASFQCEAVIDYGAMYHQVYNHEALTREFMQFVSEQTDMKVITCTEAMTGEDFGYMLQEIPGFMFWLGVNSEYGLHHAKLKPDEEAIEKAIVFLDQYVKWKGTRK.

The active site involves Asp-69. Glu-128 (proton acceptor) is an active-site residue.

It belongs to the peptidase M20A family. N-acetyldiaminopimelate deacetylase subfamily.

The catalysed reaction is N-acetyl-(2S,6S)-2,6-diaminopimelate + H2O = (2S,6S)-2,6-diaminopimelate + acetate. The protein operates within amino-acid biosynthesis; L-lysine biosynthesis via DAP pathway; LL-2,6-diaminopimelate from (S)-tetrahydrodipicolinate (acetylase route): step 3/3. In terms of biological role, catalyzes the conversion of N-acetyl-diaminopimelate to diaminopimelate and acetate. This chain is N-acetyldiaminopimelate deacetylase, found in Bacillus cereus (strain AH820).